The primary structure comprises 209 residues: Kynurenine formamidase (209 aa).

Trp-19 is a binding site for substrate. Zn(2+) contacts are provided by His-49, His-53, and Asp-55. Catalysis depends on His-59, which acts as the Proton donor/acceptor. Zn(2+) is bound by residues His-160 and Glu-172.

It belongs to the Cyclase 1 superfamily. KynB family. As to quaternary structure, homodimer. It depends on Zn(2+) as a cofactor.

It carries out the reaction N-formyl-L-kynurenine + H2O = L-kynurenine + formate + H(+). It functions in the pathway amino-acid degradation; L-tryptophan degradation via kynurenine pathway; L-kynurenine from L-tryptophan: step 2/2. Catalyzes the hydrolysis of N-formyl-L-kynurenine to L-kynurenine, the second step in the kynurenine pathway of tryptophan degradation. This Geobacillus thermodenitrificans (strain NG80-2) protein is Kynurenine formamidase.